A 360-amino-acid chain; its full sequence is Chorismate synthase (360 aa).

Residues R48 and R54 each contribute to the NADP(+) site. FMN-binding positions include 125–127 (RSS), 246–247 (NA), G286, 301–305 (KPTSS), and R327.

This sequence belongs to the chorismate synthase family. In terms of assembly, homotetramer. It depends on FMNH2 as a cofactor.

The enzyme catalyses 5-O-(1-carboxyvinyl)-3-phosphoshikimate = chorismate + phosphate. The protein operates within metabolic intermediate biosynthesis; chorismate biosynthesis; chorismate from D-erythrose 4-phosphate and phosphoenolpyruvate: step 7/7. In terms of biological role, catalyzes the anti-1,4-elimination of the C-3 phosphate and the C-6 proR hydrogen from 5-enolpyruvylshikimate-3-phosphate (EPSP) to yield chorismate, which is the branch point compound that serves as the starting substrate for the three terminal pathways of aromatic amino acid biosynthesis. This reaction introduces a second double bond into the aromatic ring system. This is Chorismate synthase from Glaesserella parasuis serovar 5 (strain SH0165) (Haemophilus parasuis).